Consider the following 201-residue polypeptide: Sorting nexin-10 (201 aa).

Residues 8-125 (EEFVSVWVRD…SLHLFLQSHL (118 aa)) are required for interaction with ATP6V1D. Positions 10–127 (FVSVWVRDPR…HLFLQSHLNS (118 aa)) constitute a PX domain. A 1,2-diacyl-sn-glycero-3-phospho-(1D-myo-inositol-3-phosphate) is bound by residues arginine 53, lysine 79, and arginine 94. Residues 156 to 201 (FPEEDEEGKKENDIDYDSESSSSGLGHSSDDSSSHGCKVNTAPQES) are disordered.

The protein belongs to the sorting nexin family. In terms of assembly, interacts with ATP6V1D; may play a role in ciliogenesis.

The protein resides in the cytoplasm. It is found in the endosome membrane. The protein localises to the cytoskeleton. Its subcellular location is the microtubule organizing center. It localises to the centrosome. Its function is as follows. Probable phosphoinositide-binding protein involved in protein sorting and membrane trafficking in endosomes. Plays a role in cilium biogenesis through regulation of the transport and the localization of proteins to the cilium. Required for the localization to the cilium of V-ATPase subunit ATP6V1D and ATP6V0D1, and RAB8A. Involved in osteoclast differentiation and therefore bone resorption. This chain is Sorting nexin-10 (SNX10), found in Homo sapiens (Human).